Reading from the N-terminus, the 243-residue chain is MSQTHFGFQQVDEQEKAGKVAGVFHSVASKYDVMNDLMSGGLHRVWKMFTIAQAAVRPGYKVLDIAGGTGDLAKAFARQAGPTGEVWLTDINESMLRVGRDRLLDAGVLTPTALCDAEHIPFPNAYFDVVTVAFGLRNMTHKDRALAEMRRVVKPGGKVMVLEFSKVWQPLEKAYDVYSFKVLPWLGSKVAGDPESYRYLAESIRMHPDQETLKQMMEQAGLDSVEYFNLTAGVVALHVGRRL.

S-adenosyl-L-methionine contacts are provided by residues T69, D90, and 116 to 117; that span reads DA.

Belongs to the class I-like SAM-binding methyltransferase superfamily. MenG/UbiE family.

It catalyses the reaction a 2-demethylmenaquinol + S-adenosyl-L-methionine = a menaquinol + S-adenosyl-L-homocysteine + H(+). The enzyme catalyses a 2-methoxy-6-(all-trans-polyprenyl)benzene-1,4-diol + S-adenosyl-L-methionine = a 5-methoxy-2-methyl-3-(all-trans-polyprenyl)benzene-1,4-diol + S-adenosyl-L-homocysteine + H(+). It functions in the pathway quinol/quinone metabolism; menaquinone biosynthesis; menaquinol from 1,4-dihydroxy-2-naphthoate: step 2/2. Its pathway is cofactor biosynthesis; ubiquinone biosynthesis. In terms of biological role, methyltransferase required for the conversion of demethylmenaquinol (DMKH2) to menaquinol (MKH2) and the conversion of 2-polyprenyl-6-methoxy-1,4-benzoquinol (DDMQH2) to 2-polyprenyl-3-methyl-6-methoxy-1,4-benzoquinol (DMQH2). This Ralstonia pickettii (strain 12J) protein is Ubiquinone/menaquinone biosynthesis C-methyltransferase UbiE.